A 669-amino-acid polypeptide reads, in one-letter code: L-type lectin-domain containing receptor kinase V.9 (669 aa).

An N-terminal signal peptide occupies residues 1-21 (MKFFVLVLLLVLQFFSNKALS). The Extracellular segment spans residues 22–286 (QSEEGEFGFN…RDSRSTSVKK (265 aa)). Residues 38-259 (SGIAITNSKG…SHYILGWTFK (222 aa)) are legume-lectin like. 5 N-linked (GlcNAc...) asparagine glycosylation sites follow: N53, N75, N124, N206, and N261. The helical transmembrane segment at 287 to 307 (ILAISLSLTSLAILVFLTISY) threads the bilayer. Topologically, residues 308–669 (MLFLKRKKLM…FTEPFVSHGR (362 aa)) are cytoplasmic. Positions 344–603 (FRNSELLGKG…LGLFCSHPVA (260 aa)) constitute a Protein kinase domain. ATP is bound by residues 350-358 (LGKGGFGKV) and K373. Residue D469 is the Proton acceptor of the active site.

In the C-terminal section; belongs to the protein kinase superfamily. Ser/Thr protein kinase family. This sequence in the N-terminal section; belongs to the leguminous lectin family.

The protein resides in the cell membrane. It catalyses the reaction L-seryl-[protein] + ATP = O-phospho-L-seryl-[protein] + ADP + H(+). The enzyme catalyses L-threonyl-[protein] + ATP = O-phospho-L-threonyl-[protein] + ADP + H(+). This chain is L-type lectin-domain containing receptor kinase V.9 (LECRK59), found in Arabidopsis thaliana (Mouse-ear cress).